A 73-amino-acid polypeptide reads, in one-letter code: Probable movement protein p8 (73 aa).

Positions 1–12 are enriched in polar residues; the sequence is MSTVETPAQDTL. Positions 1–48 are disordered; sequence MSTVETPAQDTLATKEPNKTGAKDRQQARSARLSVAAGAGRTALSQRD. Positions 16–27 are enriched in basic and acidic residues; sequence EPNKTGAKDRQQ.

The protein belongs to the carmovirus/necrovirus/panicovirus movement protein p8 family.

It is found in the host cell wall. Cell-to-cell movement. This Muhlenbergia (Blackwell switchgrass) protein is Probable movement protein p8.